The sequence spans 243 residues: UPF0246 protein MGAS9429_Spy1799 (243 aa).

This sequence belongs to the UPF0246 family.

The chain is UPF0246 protein MGAS9429_Spy1799 from Streptococcus pyogenes serotype M12 (strain MGAS9429).